A 664-amino-acid polypeptide reads, in one-letter code: Protein-arginine deiminase type-3 (664 aa).

This sequence belongs to the protein arginine deiminase family. Ca(2+) serves as cofactor. As to expression, hair follicles, and epidermis at very low levels.

It localises to the cytoplasm. It carries out the reaction L-arginyl-[protein] + H2O = L-citrullyl-[protein] + NH4(+). Functionally, catalyzes the deimination of arginine residues of proteins. The chain is Protein-arginine deiminase type-3 (PADI3) from Homo sapiens (Human).